A 308-amino-acid polypeptide reads, in one-letter code: Ribonuclease HIII (308 aa).

Residues 91-308 (KNVIGSDEVG…TEKALKMVKK (218 aa)) enclose the RNase H type-2 domain. A divalent metal cation-binding residues include D97, E98, and D202.

The protein belongs to the RNase HII family. RnhC subfamily. The cofactor is Mn(2+). It depends on Mg(2+) as a cofactor.

Its subcellular location is the cytoplasm. It catalyses the reaction Endonucleolytic cleavage to 5'-phosphomonoester.. Its function is as follows. Endonuclease that specifically degrades the RNA of RNA-DNA hybrids. The protein is Ribonuclease HIII of Listeria monocytogenes serovar 1/2a (strain ATCC BAA-679 / EGD-e).